A 256-amino-acid polypeptide reads, in one-letter code: Hydroxyacylglutathione hydrolase (256 aa).

The Zn(2+) site is built by H57, H59, D61, H62, H115, D134, and H172.

Belongs to the metallo-beta-lactamase superfamily. Glyoxalase II family. In terms of assembly, monomer. Zn(2+) is required as a cofactor.

The catalysed reaction is an S-(2-hydroxyacyl)glutathione + H2O = a 2-hydroxy carboxylate + glutathione + H(+). It participates in secondary metabolite metabolism; methylglyoxal degradation; (R)-lactate from methylglyoxal: step 2/2. Its function is as follows. Thiolesterase that catalyzes the hydrolysis of S-D-lactoyl-glutathione to form glutathione and D-lactic acid. The chain is Hydroxyacylglutathione hydrolase from Rhizobium meliloti (strain 1021) (Ensifer meliloti).